Consider the following 346-residue polypeptide: Partitioning defective 6 homolog alpha (346 aa).

The interval 1–116 is interaction with PRKCI and PRKCZ; the sequence is MARPQRTPAR…SNSLQRRKKG (116 aa). The 81-residue stretch at 15-95 folds into the PB1 domain; it reads IVEVKSKFDA…PPLRLLVQKR (81 aa). The interval 126–253 is interaction with PARD3 and CDC42; the sequence is RTRPPLLISL…VTVKPANQRN (128 aa). Residues 133-150 enclose the Pseudo-CRIB domain; that stretch reads ISLPQDFRQVSSVIDVDL. The PDZ domain occupies 157 to 250; sequence RVRLHKHGSD…NLIVTVKPAN (94 aa). Disordered regions lie at residues 257-294 and 317-346; these read RGASGRLTGPSSVGPGPTDPDSDDDNSDPVIENRHPPC and GSSLPSLDSREQANSGWGNGMRGDVSGFSL. Position 278 is a phosphoserine (Ser278). Residues 317–332 are compositionally biased toward polar residues; the sequence is GSSLPSLDSREQANSG. Ser345 carries the phosphoserine modification.

This sequence belongs to the PAR6 family. As to quaternary structure, interacts with PALS1 and CRB3. Interacts with PARD3. Interacts with GTP-bound forms of CDC42, RHOQ/TC10 and RAC1. Interacts with the N-terminal part of PRKCI and PRKCZ. Part of a complex with PARD3, CDC42 or RAC1 and PRKCI or PRKCZ. Part of a complex with LLGL1 and PRKCI. Interacts with MAP2K5. Interacts with TGFBR1; involved in TGF-beta induced epithelial to mesenchymal transition. Interacts with ECT2 ('Thr-359' phosphorylated form) and PRKCI. Interacts with DCTN1 and PCM1. Phosphorylated by the TGF-beta receptor. In terms of processing, ubiquitinated by the SCF(FBXO31) complex, leading to its proteasomal degradation.

Its subcellular location is the cytoplasm. It is found in the cell membrane. The protein resides in the cell junction. It localises to the tight junction. The protein localises to the cytoskeleton. Its subcellular location is the microtubule organizing center. It is found in the centrosome. The protein resides in the centriolar satellite. Adapter protein involved in asymmetrical cell division and cell polarization processes. Probably involved in the formation of epithelial tight junctions. Association with PARD3 may prevent the interaction of PARD3 with F11R/JAM1, thereby preventing tight junction assembly. The PARD6-PARD3 complex links GTP-bound Rho small GTPases to atypical protein kinase C proteins. Regulates centrosome organization and function. Essential for the centrosomal recruitment of key proteins that control centrosomal microtubule organization. In Rattus norvegicus (Rat), this protein is Partitioning defective 6 homolog alpha (Pard6a).